The primary structure comprises 461 residues: Zinc finger protein ZFP2 (461 aa).

C2H2-type zinc fingers lie at residues 102–124, 130–152, 158–180, 186–208, 214–236, 242–264, 270–292, 298–320, 326–348, 354–376, 382–404, 410–432, and 438–460; these read YECNQCSKTFSQSSSLLKHQRIH, YKCNVCGKHFIERSSLTVHQRIH, YKCNECGKAFSQSMNLTVHQRTH, YQCKECGKAFHKNSSLIQHERIH, YKCNECGKAFTQSMNLTVHQRTH, YECNECGKAFSQSMHLIVHQRSH, YECSQCGKAFSKSSTLTLHQRNH, YKCNKCGKSFSQSTYLIEHQRLH, FECNECGKAFSKNSSLTQHRRIH, YECMVCGKHFTGRSSLTVHQVIH, YECNECGKAFSQSAYLIEHQRIH, YECDQCGKAFIKNSSLTVHQRTH, and YQCNECGKAFSRSTNLTRHQRTH.

Belongs to the krueppel C2H2-type zinc-finger protein family.

It is found in the nucleus. In terms of biological role, probable transcription factor involved in neuronal differentiation and/or phenotypic maintenance. The sequence is that of Zinc finger protein ZFP2 (ZFP2) from Homo sapiens (Human).